Here is a 103-residue protein sequence, read N- to C-terminus: MSSVFSKPNLKRPSFDVKNLTKPSRLLSATLRSSCAFLSSASFFACSLCFFCCSSISFCSLASSSARLRYSSSHSFFCWVLFSRSGLAYSSSNLSSKSSRLRS.

This is an uncharacterized protein from Mycoplasma pneumoniae (strain ATCC 29342 / M129 / Subtype 1) (Mycoplasmoides pneumoniae).